Consider the following 392-residue polypeptide: Methylthioribose-1-phosphate isomerase (392 aa).

Residue aspartate 253 is the Proton donor of the active site.

Belongs to the eIF-2B alpha/beta/delta subunits family. MtnA subfamily.

The protein resides in the cytoplasm. Its subcellular location is the nucleus. The enzyme catalyses 5-(methylsulfanyl)-alpha-D-ribose 1-phosphate = 5-(methylsulfanyl)-D-ribulose 1-phosphate. Its pathway is amino-acid biosynthesis; L-methionine biosynthesis via salvage pathway; L-methionine from S-methyl-5-thio-alpha-D-ribose 1-phosphate: step 1/6. Its function is as follows. Catalyzes the interconversion of methylthioribose-1-phosphate (MTR-1-P) into methylthioribulose-1-phosphate (MTRu-1-P). The protein is Methylthioribose-1-phosphate isomerase (mri1) of Pyrenophora tritici-repentis (strain Pt-1C-BFP) (Wheat tan spot fungus).